Here is a 140-residue protein sequence, read N- to C-terminus: MAIERTFSIIKPDATRRNLTGAINALIEKAGLRIIAQKRVQITRPQAETFYAVHKERPFFGALVDTMISGPVVVQVLEGENAIKAYRDVLGATDPAKAAPGTIRKEFALSVGENSGHGSDASETAAIEIAQWFSGNEIVG.

ATP contacts are provided by Lys-11, Phe-59, Arg-87, Thr-93, Arg-104, and Asn-114. His-117 functions as the Pros-phosphohistidine intermediate in the catalytic mechanism.

Belongs to the NDK family. As to quaternary structure, homotetramer. Requires Mg(2+) as cofactor.

It localises to the cytoplasm. The catalysed reaction is a 2'-deoxyribonucleoside 5'-diphosphate + ATP = a 2'-deoxyribonucleoside 5'-triphosphate + ADP. It catalyses the reaction a ribonucleoside 5'-diphosphate + ATP = a ribonucleoside 5'-triphosphate + ADP. Its function is as follows. Major role in the synthesis of nucleoside triphosphates other than ATP. The ATP gamma phosphate is transferred to the NDP beta phosphate via a ping-pong mechanism, using a phosphorylated active-site intermediate. The sequence is that of Nucleoside diphosphate kinase from Methylocella silvestris (strain DSM 15510 / CIP 108128 / LMG 27833 / NCIMB 13906 / BL2).